The following is a 97-amino-acid chain: DNA/RNA-binding protein Alba (97 aa).

At Lys-15 the chain carries N6-acetyllysine.

It belongs to the histone-like Alba family. Acetylated. Acetylation at Lys-15 decreases DNA-binding affinity.

Its subcellular location is the cytoplasm. The protein resides in the chromosome. Its function is as follows. Binds double-stranded DNA tightly but without sequence specificity. Involved in DNA compaction. The chain is DNA/RNA-binding protein Alba from Ignicoccus hospitalis (strain KIN4/I / DSM 18386 / JCM 14125).